The sequence spans 543 residues: Tyrosine-protein kinase Yes (543 aa).

Positions 1–20 (MGCIKSKENKSPAIKYRPEN) are enriched in basic and acidic residues. Residues 1-45 (MGCIKSKENKSPAIKYRPENTPEPVSTSVSHYGAEPTTVSPCPSS) are disordered. The N-myristoyl glycine moiety is linked to residue Gly-2. The S-palmitoyl cysteine; in membrane form moiety is linked to residue Cys-3. Thr-21 carries the phosphothreonine modification. Tyr-32 is subject to Phosphotyrosine. Ser-40 is subject to Phosphoserine. The SH3 domain maps to 91 to 152 (GGVTIFVALY…PSNYVAPADS (62 aa)). The 98-residue stretch at 158–255 (WYFGKMGRKD…GLCHKLTTVC (98 aa)) folds into the SH2 domain. One can recognise a Protein kinase domain in the interval 277-530 (LRLEVKLGQG…YIQSFLEDYF (254 aa)). ATP contacts are provided by residues 283–291 (LGQGCFGEV) and Lys-305. A phosphotyrosine mark is found at Tyr-336 and Tyr-345. The active-site Proton acceptor is the Asp-396. The residue at position 426 (Tyr-426) is a Phosphotyrosine; by autocatalysis. Residue Tyr-446 is modified to Phosphotyrosine. Tyr-537 is subject to Phosphotyrosine; by CSK.

It belongs to the protein kinase superfamily. Tyr protein kinase family. SRC subfamily. Interacts with YAP1 and CSF1R. Interacts with CTNND1; this interaction allows YES1-mediated activation of FYN and FER and subsequent phosphorylation of CTNND1. Interacts with FASLG. Interacts with IL6ST/gp130. Interacts with SCRIB, when YES1 is in a closed conformation; the interaction facilitates YES1 autophosphorylation. Post-translationally, phosphorylated. Phosphorylation by CSK on the C-terminal tail maintains the enzyme in an inactive state. Autophosphorylation at Tyr-426 maintains enzyme activity by blocking CSK-mediated inhibition. Palmitoylation at Cys-3 promotes membrane localization. As to expression, expressed in the epithelial cells of renal proximal tubules and stomach as well as hematopoietic cells in the bone marrow and spleen in the fetal tissues. In adult, expressed in epithelial cells of the renal proximal tubules and present in keratinocytes in the basal epidermal layer of epidermis.

It localises to the cell membrane. Its subcellular location is the cytoplasm. The protein localises to the cytoskeleton. It is found in the microtubule organizing center. The protein resides in the centrosome. It localises to the cytosol. Its subcellular location is the cell junction. It carries out the reaction L-tyrosyl-[protein] + ATP = O-phospho-L-tyrosyl-[protein] + ADP + H(+). Its function is as follows. Non-receptor protein tyrosine kinase that is involved in the regulation of cell growth and survival, apoptosis, cell-cell adhesion, cytoskeleton remodeling, and differentiation. Stimulation by receptor tyrosine kinases (RTKs) including EGFR, PDGFR, CSF1R and FGFR leads to recruitment of YES1 to the phosphorylated receptor, and activation and phosphorylation of downstream substrates. Upon EGFR activation, promotes the phosphorylation of PARD3 to favor epithelial tight junction assembly. Participates in the phosphorylation of specific junctional components such as CTNND1 by stimulating the FYN and FER tyrosine kinases at cell-cell contacts. Upon T-cell stimulation by CXCL12, phosphorylates collapsin response mediator protein 2/DPYSL2 and induces T-cell migration. Participates in CD95L/FASLG signaling pathway and mediates AKT-mediated cell migration. Plays a role in cell cycle progression by phosphorylating the cyclin-dependent kinase 4/CDK4 thus regulating the G1 phase. Also involved in G2/M progression and cytokinesis. Catalyzes phosphorylation of organic cation transporter OCT2 which induces its transport activity. This Homo sapiens (Human) protein is Tyrosine-protein kinase Yes (YES1).